Consider the following 1084-residue polypeptide: Putative tRNA-specific 2-thiouridylase (1084 aa).

3 consecutive transmembrane segments (helical) span residues 1–21 (MLIFFFFFFFFKYIYNIFILT), 32–52 (FIISFIFSTLMFFYFCTFYVI), and 309–329 (IITIDAYSNNLILYCFLYLIL). The active-site Nucleophile is Cys538. Cys538 and Cys715 are oxidised to a cystine. Catalysis depends on Cys715, which acts as the Cysteine persulfide intermediate.

Belongs to the MnmA/TRMU family.

Its subcellular location is the plastid. The protein resides in the apicoplast. It is found in the membrane. It catalyses the reaction S-sulfanyl-L-cysteinyl-[protein] + uridine(34) in tRNA + AH2 + ATP = 2-thiouridine(34) in tRNA + L-cysteinyl-[protein] + A + AMP + diphosphate + H(+). In terms of biological role, catalyzes the 2-thiolation of uridine at the wobble position (U34) of tRNA, leading to the formation of s(2)U34. Required for apicoplast maintenance. This Plasmodium falciparum (isolate 3D7) protein is Putative tRNA-specific 2-thiouridylase.